The primary structure comprises 367 residues: Germination protease (367 aa).

The propeptide occupies 1 to 15; the sequence is MKEPLDLSKYSVRTD.

The protein belongs to the peptidase A25 family. Homotetramer. Post-translationally, autoproteolytically processed. The inactive tetrameric zymogen termed p46 autoprocesses to a smaller form termed p41, which is active only during spore germination.

It catalyses the reaction Endopeptidase action with P4 Glu or Asp, P1 preferably Glu &gt; Asp, P1' hydrophobic and P2' Ala.. Initiates the rapid degradation of small, acid-soluble proteins during spore germination. The sequence is that of Germination protease from Bacillus thuringiensis subsp. konkukian (strain 97-27).